Consider the following 239-residue polypeptide: ATP synthase subunit a (239 aa).

Transmembrane regions (helical) follow at residues 17–37 (GTVCMMVLLTCLIVFFLVYFF), 75–95 (FHLLAFTLFLFVFVANNIGLI), 113–133 (DPFVTLTLAFIMITLTHLFGV), 182–202 (LLTLIANMMNNLGWFSLPLAI), and 206–226 (MVWIAFSLFIGSIQAFVFVTL).

The protein belongs to the ATPase A chain family. As to quaternary structure, F-type ATPases have 2 components, CF(1) - the catalytic core - and CF(0) - the membrane proton channel. CF(1) has five subunits: alpha(3), beta(3), gamma(1), delta(1), epsilon(1). CF(0) has three main subunits: a(1), b(2) and c(9-12). The alpha and beta chains form an alternating ring which encloses part of the gamma chain. CF(1) is attached to CF(0) by a central stalk formed by the gamma and epsilon chains, while a peripheral stalk is formed by the delta and b chains.

The protein resides in the cell membrane. Functionally, key component of the proton channel; it plays a direct role in the translocation of protons across the membrane. The polypeptide is ATP synthase subunit a (Enterococcus hirae (strain ATCC 9790 / DSM 20160 / JCM 8729 / LMG 6399 / NBRC 3181 / NCIMB 6459 / NCDO 1258 / NCTC 12367 / WDCM 00089 / R)).